A 108-amino-acid polypeptide reads, in one-letter code: V-type proton ATPase subunit G (108 aa).

Basic and acidic residues predominate over residues 48–60; that stretch reads YASKKEEEFKKSE. Residues 48–89 are disordered; it reads YASKKEEEFKKSESQASGIYSQAEAESKKQVQDTFASIETSS. The segment covering 79 to 89 has biased composition (polar residues); it reads QDTFASIETSS.

This sequence belongs to the V-ATPase G subunit family. V-ATPase is a heteromultimeric enzyme composed of a peripheral catalytic V1 complex (components A to H) attached to an integral membrane V0 proton pore complex (components: a, c, c', c'', d, e, f and VOA1).

The protein resides in the vacuole membrane. In terms of biological role, subunit of the V1 complex of vacuolar(H+)-ATPase (V-ATPase), a multisubunit enzyme composed of a peripheral complex (V1) that hydrolyzes ATP and a membrane integral complex (V0) that translocates protons. V-ATPase is responsible for acidifying and maintaining the pH of intracellular compartments. In Schizosaccharomyces pombe (strain 972 / ATCC 24843) (Fission yeast), this protein is V-type proton ATPase subunit G (vma10).